We begin with the raw amino-acid sequence, 282 residues long: Undecaprenyl-diphosphatase (282 aa).

The next 7 membrane-spanning stretches (helical) occupy residues 40-60 (GAAF…IYFY), 87-107 (MGWM…LFKT), 116-136 (LYWI…AEWL), 153-173 (IGWK…IPGS), 196-216 (FSFL…LYET), 229-249 (NLAV…AFLI), and 256-276 (STAL…GLIA).

Belongs to the UppP family.

The protein resides in the cell inner membrane. The catalysed reaction is di-trans,octa-cis-undecaprenyl diphosphate + H2O = di-trans,octa-cis-undecaprenyl phosphate + phosphate + H(+). Functionally, catalyzes the dephosphorylation of undecaprenyl diphosphate (UPP). Confers resistance to bacitracin. The protein is Undecaprenyl-diphosphatase of Chlorobium phaeobacteroides (strain BS1).